The following is a 224-amino-acid chain: MKVAGADEAGRGPVIGPLVIVAAVVEEDKIRSLTKLGVKDSKQLTPAQREKLFDEIVKVLDDYSVVIVSPQDIDGRKGSMNELEVENFVKALNSLKVKPEVIYIDSADVKAERFAENIRSRLAYEAKVVAEHKADAKYEIVSAASILAKVIRDREIEKLKAEYGDFGSGYPSDPRTKKWLEEWYSKHGNFPPIVRRTWDTAKKIEEKFKRAQLTLDNFLKRFRN.

The RNase H type-2 domain occupies 1–210 (MKVAGADEAG…AKKIEEKFKR (210 aa)). Residues aspartate 7, glutamate 8, and aspartate 105 each coordinate a divalent metal cation.

The protein belongs to the RNase HII family. It depends on Mn(2+) as a cofactor. Requires Mg(2+) as cofactor.

It is found in the cytoplasm. It catalyses the reaction Endonucleolytic cleavage to 5'-phosphomonoester.. Endonuclease that specifically degrades the RNA of RNA-DNA hybrids. In Pyrococcus abyssi (strain GE5 / Orsay), this protein is Ribonuclease HII (rnhB).